The primary structure comprises 339 residues: MTSLFFEYTFPLIIIALKVVAITVPLILCVAYLTYVERRVIGLMQLRRGPNVVGPFGLLQPIADAVKLLFKEPIIPTNSDRILFILAPMITFILSLIGWAVVPFAKGLVLADINVGVLYILAISSLSVYGIIIAGWASNSKYAFLGAIRSSAQMISYEVSMGLVIITVLLTTGTLNLSGIIEAQRTIPWWIDLMLLPMGVVFFISVLAETNRLPFDLPEAESELVAGYNVEYSSMGFALFFLGEYANMILVSAMTTTFFLGGYLPPFNISWLDCIPGFFWFAFKVGFLLFCFLWIRATLPRYRYDQLMRLGWKVLLPLTLFWVVLVSSVLMYTDHLPSV.

9 consecutive transmembrane segments (helical) span residues 10–30 (FPLIIIALKVVAITVPLILCV), 50–70 (PNVVGPFGLLQPIADAVKLLF), 82–102 (ILFILAPMITFILSLIGWAVV), 115–135 (VGVLYILAISSLSVYGIIIAG), 161–181 (MGLVIITVLLTTGTLNLSGII), 187–207 (IPWWIDLMLLPMGVVFFISVL), 235–255 (MGFALFFLGEYANMILVSAMT), 275–295 (IPGFFWFAFKVGFLLFCFLWI), and 310–330 (LGWKVLLPLTLFWVVLVSSVL).

Belongs to the complex I subunit 1 family. In terms of assembly, NDH-1 is composed of 14 different subunits. Subunits NuoA, H, J, K, L, M, N constitute the membrane sector of the complex.

It is found in the cell inner membrane. It catalyses the reaction a quinone + NADH + 5 H(+)(in) = a quinol + NAD(+) + 4 H(+)(out). Its function is as follows. NDH-1 shuttles electrons from NADH, via FMN and iron-sulfur (Fe-S) centers, to quinones in the respiratory chain. The immediate electron acceptor for the enzyme in this species is believed to be ubiquinone. Couples the redox reaction to proton translocation (for every two electrons transferred, four hydrogen ions are translocated across the cytoplasmic membrane), and thus conserves the redox energy in a proton gradient. This subunit may bind ubiquinone. This Rickettsia canadensis (strain McKiel) protein is NADH-quinone oxidoreductase subunit H.